Here is a 152-residue protein sequence, read N- to C-terminus: SsrA-binding protein (152 aa).

The protein belongs to the SmpB family.

The protein localises to the cytoplasm. In terms of biological role, required for rescue of stalled ribosomes mediated by trans-translation. Binds to transfer-messenger RNA (tmRNA), required for stable association of tmRNA with ribosomes. tmRNA and SmpB together mimic tRNA shape, replacing the anticodon stem-loop with SmpB. tmRNA is encoded by the ssrA gene; the 2 termini fold to resemble tRNA(Ala) and it encodes a 'tag peptide', a short internal open reading frame. During trans-translation Ala-aminoacylated tmRNA acts like a tRNA, entering the A-site of stalled ribosomes, displacing the stalled mRNA. The ribosome then switches to translate the ORF on the tmRNA; the nascent peptide is terminated with the 'tag peptide' encoded by the tmRNA and targeted for degradation. The ribosome is freed to recommence translation, which seems to be the essential function of trans-translation. In Rickettsia rickettsii, this protein is SsrA-binding protein.